The sequence spans 121 residues: Anther-specific protein SF2 (121 aa).

The signal sequence occupies residues 1 to 21; that stretch reads MANNSVSYLVLLLLVFVLAIS. The N-linked (GlcNAc...) asparagine glycan is linked to Asn-115.

As to expression, epidermal anther cells.

The protein resides in the secreted. It is found in the cell wall. Its function is as follows. Anther-specific cell wall protein which could contribute to the cell wall architecture of epidermal anther cells via intermolecular disulfide bridges. The sequence is that of Anther-specific protein SF2 from Helianthus annuus (Common sunflower).